Here is a 347-residue protein sequence, read N- to C-terminus: Large ribosomal subunit protein uL10 (347 aa).

The interval 312–347 (AAAPAEEEVKKEEEPEEEEEDHAEEDGMAGLGALFG) is disordered. Over residues 325–338 (EPEEEEEDHAEEDG) the composition is skewed to acidic residues.

This sequence belongs to the universal ribosomal protein uL10 family. As to quaternary structure, part of the 50S ribosomal subunit. Forms part of the ribosomal stalk which helps the ribosome interact with GTP-bound translation factors. Forms a heptameric L10(L12)2(L12)2(L12)2 complex, where L10 forms an elongated spine to which the L12 dimers bind in a sequential fashion.

Functionally, forms part of the ribosomal stalk, playing a central role in the interaction of the ribosome with GTP-bound translation factors. The chain is Large ribosomal subunit protein uL10 from Methanosarcina acetivorans (strain ATCC 35395 / DSM 2834 / JCM 12185 / C2A).